The primary structure comprises 145 residues: Hemoglobin subunit beta (145 aa).

Positions 1–145 constitute a Globin domain; the sequence is MLTAEEKAAV…VANALAHRYH (145 aa). Thr-11 carries the phosphothreonine modification. Ser-43 carries the phosphoserine modification. Lys-58 carries the post-translational modification N6-acetyllysine. Residue His-62 participates in heme b binding. The residue at position 81 (Lys-81) is an N6-acetyllysine. Residue His-91 coordinates heme b. The residue at position 92 (Cys-92) is an S-nitrosocysteine.

This sequence belongs to the globin family. Heterotetramer of two alpha chains and two beta chains. As to expression, red blood cells.

Its function is as follows. Involved in oxygen transport from the lung to the various peripheral tissues. This is Hemoglobin subunit beta (HBB) from Bos mutus grunniens (Wild yak).